Reading from the N-terminus, the 185-residue chain is Elongation factor P (185 aa).

It belongs to the elongation factor P family.

Its subcellular location is the cytoplasm. The protein operates within protein biosynthesis; polypeptide chain elongation. Its function is as follows. Involved in peptide bond synthesis. Stimulates efficient translation and peptide-bond synthesis on native or reconstituted 70S ribosomes in vitro. Probably functions indirectly by altering the affinity of the ribosome for aminoacyl-tRNA, thus increasing their reactivity as acceptors for peptidyl transferase. The sequence is that of Elongation factor P from Acaryochloris marina (strain MBIC 11017).